The following is a 106-amino-acid chain: Vacuolar ATPase assembly integral membrane protein VMA21 homolog (106 aa).

Residues 1-26 (MSNKNKKSGGAGNGAAQKQTRQQSHD) form a disordered region. Topologically, residues 1–32 (MSNKNKKSGGAGNGAAQKQTRQQSHDSQDYSS) are cytoplasmic. A helical membrane pass occupies residues 33–53 (FKIVLFYCMLIVFLPVVTFFL). Residues 54–69 (LKGFVLDRFFSLSEVK) lie on the Lumenal side of the membrane. Residues 70–90 (VNIASAVGAVVSLHIALGLYI) form a helical membrane-spanning segment. Over 91–106 (YRAYFGATGSKAVKED) the chain is Cytoplasmic.

This sequence belongs to the VMA21 family.

It localises to the endoplasmic reticulum membrane. The protein resides in the endoplasmic reticulum-Golgi intermediate compartment membrane. The protein localises to the cytoplasmic vesicle. It is found in the COPII-coated vesicle membrane. Its function is as follows. Required for the assembly of the V0 complex of the vacuolar ATPase (V-ATPase) in the endoplasmic reticulum. In Drosophila ananassae (Fruit fly), this protein is Vacuolar ATPase assembly integral membrane protein VMA21 homolog.